Consider the following 810-residue polypeptide: Cell division control protein 48 homolog E (810 aa).

At serine 2 the chain carries N-acetylserine. Serine 41 carries the phosphoserine modification. Residues glycine 248 to threonine 255 and glycine 521 to threonine 528 contribute to the ATP site.

It belongs to the AAA ATPase family.

The protein resides in the nucleus. It is found in the cytoplasm. The protein localises to the cytoskeleton. It localises to the phragmoplast. Functionally, probably functions in cell division and growth processes. Interacts with certain SNAREs as part of specialized membrane fusion events where vesicles from the same organelle fuse (homotypic fusion). This is Cell division control protein 48 homolog E (CDC48E) from Arabidopsis thaliana (Mouse-ear cress).